A 250-amino-acid chain; its full sequence is Triosephosphate isomerase (250 aa).

9–11 (NWK) contributes to the substrate binding site. The active-site Electrophile is His100. The active-site Proton acceptor is Glu169. Residues Gly175, Ser208, and 229–230 (GG) each bind substrate.

Belongs to the triosephosphate isomerase family. Homodimer.

It localises to the cytoplasm. It carries out the reaction D-glyceraldehyde 3-phosphate = dihydroxyacetone phosphate. It participates in carbohydrate biosynthesis; gluconeogenesis. It functions in the pathway carbohydrate degradation; glycolysis; D-glyceraldehyde 3-phosphate from glycerone phosphate: step 1/1. Functionally, involved in the gluconeogenesis. Catalyzes stereospecifically the conversion of dihydroxyacetone phosphate (DHAP) to D-glyceraldehyde-3-phosphate (G3P). This is Triosephosphate isomerase from Synechococcus sp. (strain JA-2-3B'a(2-13)) (Cyanobacteria bacterium Yellowstone B-Prime).